Reading from the N-terminus, the 130-residue chain is Small ribosomal subunit protein uS8 (130 aa).

The protein belongs to the universal ribosomal protein uS8 family. As to quaternary structure, part of the 30S ribosomal subunit.

Functionally, one of the primary rRNA binding proteins, it binds directly to 16S rRNA central domain where it helps coordinate assembly of the platform of the 30S subunit. This is Small ribosomal subunit protein uS8 from Pyrococcus abyssi (strain GE5 / Orsay).